We begin with the raw amino-acid sequence, 364 residues long: Probable cysteine protease RDL4 (364 aa).

An N-terminal signal peptide occupies residues 1 to 23 (MGSAKSAMLILLVAMVIASCATA). Positions 24–136 (IDMSVVSYDD…DRYKTSADDV (113 aa)) are cleaved as a propeptide — activation peptide. The N-linked (GlcNAc...) asparagine glycan is linked to N87. Intrachain disulfides connect C158-C199, C192-C232, and C291-C342. The active site involves C161. Active-site residues include H297 and N317.

The protein belongs to the peptidase C1 family. As to expression, expressed in inflorescences.

In terms of biological role, probable thiol protease. The protein is Probable cysteine protease RDL4 of Arabidopsis thaliana (Mouse-ear cress).